Consider the following 345-residue polypeptide: Fibronectin type 3 and ankyrin repeat domains protein 1 (345 aa).

One can recognise a Fibronectin type-III domain in the interval 8–108 (PPSKPHPPVV…LVSVSTTREP (101 aa)). ANK repeat units follow at residues 109 to 139 (ISSE…KVDV), 143 to 172 (FGFT…DVNL), 176 to 205 (SGKD…SWQA), 209 to 238 (GGCT…EVDV), 243 to 273 (SGWT…NVNV), and 277 to 306 (NGKT…DASV).

In terms of assembly, interacts with COPS5; regulates the phosphorylation of JUN and the transcriptional activity of AP-1. Interacts with RYBP; may prevent the ubiquitin-mediated proteasomal degradation of FANK1. In terms of processing, polyubiquitinated. Polyubiquitination leads to proteasomal degradation. In terms of tissue distribution, mostly restricted to testis.

The protein localises to the nucleus. It localises to the cytoplasm. It is found in the cytosol. Its subcellular location is the cytoskeleton. The protein resides in the cilium basal body. The protein localises to the cell projection. It localises to the cilium. In terms of biological role, through the activation of JUN and AP-1-mediated transcription, may regulate apoptosis. The sequence is that of Fibronectin type 3 and ankyrin repeat domains protein 1 from Homo sapiens (Human).